Consider the following 643-residue polypeptide: Chromosomal replication initiator protein DnaA (643 aa).

The tract at residues 1–97 is domain I, interacts with DnaA modulators; the sequence is MADVPADLAA…VDDSAGEPPP (97 aa). Positions 87 to 303 are disordered; sequence TVDDSAGEPP…ASGPGEPTAR (217 aa). Positions 97 to 302 are domain II; that stretch reads PAAPPAQQTP…PASGPGEPTA (206 aa). Residues 195-209 are compositionally biased toward polar residues; the sequence is SPSSQDAYGSPSQDY. The span at 222–269 shows a compositional bias: basic and acidic residues; that stretch reads QRGDYDTPRAEYEPARPDYDSARPDYESARPEYDQRDPVRRELPEPPA. Low complexity predominate over residues 291 to 300; sequence PAPASGPGEP. A domain III, AAA+ region region spans residues 303-519; that stretch reads RLNPKYLFDT…GALIRVTAFA (217 aa). 4 residues coordinate ATP: Gly347, Gly349, Lys350, and Thr351. The segment at 520–643 is domain IV, binds dsDNA; sequence SLNRQPVDLG…TELTNRIKNG (124 aa).

Belongs to the DnaA family. As to quaternary structure, oligomerizes as a right-handed, spiral filament on DNA at oriC.

It is found in the cytoplasm. In terms of biological role, plays an essential role in the initiation and regulation of chromosomal replication. ATP-DnaA binds to the origin of replication (oriC) to initiate formation of the DNA replication initiation complex once per cell cycle. Binds the DnaA box (a 9 base pair repeat at the origin) and separates the double-stranded (ds)DNA. Forms a right-handed helical filament on oriC DNA; dsDNA binds to the exterior of the filament while single-stranded (ss)DNA is stabiized in the filament's interior. The ATP-DnaA-oriC complex binds and stabilizes one strand of the AT-rich DNA unwinding element (DUE), permitting loading of DNA polymerase. After initiation quickly degrades to an ADP-DnaA complex that is not apt for DNA replication. Binds acidic phospholipids. The protein is Chromosomal replication initiator protein DnaA of Streptomyces reticuli.